The chain runs to 212 residues: Small ribosomal subunit protein eS1 (212 aa).

Belongs to the eukaryotic ribosomal protein eS1 family.

The protein is Small ribosomal subunit protein eS1 of Ignicoccus hospitalis (strain KIN4/I / DSM 18386 / JCM 14125).